A 128-amino-acid polypeptide reads, in one-letter code: Sulfurtransferase TusD (128 aa).

The active-site Cysteine persulfide intermediate is the cysteine 78.

Belongs to the DsrE/TusD family. Heterohexamer, formed by a dimer of trimers. The hexameric TusBCD complex contains 2 copies each of TusB, TusC and TusD. The TusBCD complex interacts with TusE.

It localises to the cytoplasm. In terms of biological role, part of a sulfur-relay system required for 2-thiolation of 5-methylaminomethyl-2-thiouridine (mnm(5)s(2)U) at tRNA wobble positions. Accepts sulfur from TusA and transfers it in turn to TusE. This chain is Sulfurtransferase TusD, found in Shigella dysenteriae serotype 1 (strain Sd197).